Reading from the N-terminus, the 442-residue chain is 5-methylthioadenosine/S-adenosylhomocysteine deaminase (442 aa).

Zn(2+)-binding residues include H70 and H72. Residues E99 and H191 each contribute to the substrate site. H218 serves as a coordination point for Zn(2+). 2 residues coordinate substrate: E221 and D306. A Zn(2+)-binding site is contributed by D306.

This sequence belongs to the metallo-dependent hydrolases superfamily. MTA/SAH deaminase family. Zn(2+) is required as a cofactor.

It carries out the reaction S-adenosyl-L-homocysteine + H2O + H(+) = S-inosyl-L-homocysteine + NH4(+). It catalyses the reaction S-methyl-5'-thioadenosine + H2O + H(+) = S-methyl-5'-thioinosine + NH4(+). Catalyzes the deamination of 5-methylthioadenosine and S-adenosyl-L-homocysteine into 5-methylthioinosine and S-inosyl-L-homocysteine, respectively. Is also able to deaminate adenosine. The polypeptide is 5-methylthioadenosine/S-adenosylhomocysteine deaminase (Nitratidesulfovibrio vulgaris (strain DP4) (Desulfovibrio vulgaris)).